A 109-amino-acid chain; its full sequence is uncharacterized protein (109 aa).

This is an uncharacterized protein from Enterobacteria phage T4 (Bacteriophage T4).